A 153-amino-acid polypeptide reads, in one-letter code: Actin-related protein 2/3 complex subunit 5-like protein (153 aa).

S64 is modified (phosphoserine).

The protein belongs to the ARPC5 family. May be a component of the Arp2/3 complex in which it may replace ARPC5.

The protein localises to the cytoplasm. The protein resides in the cytoskeleton. It localises to the cell projection. Functionally, may function as component of the Arp2/3 complex which is involved in regulation of actin polymerization and together with an activating nucleation-promoting factor (NPF) mediates the formation of branched actin networks. The polypeptide is Actin-related protein 2/3 complex subunit 5-like protein (ARPC5L) (Bos taurus (Bovine)).